A 261-amino-acid chain; its full sequence is Cytochrome c oxidase subunit 3 (261 aa).

At 1-15 the chain is on the mitochondrial matrix side; sequence MAHQAHAYHMVDPSP. Residues 16-34 form a helical membrane-spanning segment; the sequence is WPLTGAIGALFLTSGLAIW. Over 35–40 the chain is Mitochondrial intermembrane; the sequence is FHFQSV. The chain crosses the membrane as a helical span at residues 41-66; sequence TLLTLGLILLLLTMYQWWRDIIREGT. At 67-72 the chain is on the mitochondrial matrix side; the sequence is FQGHHT. A helical membrane pass occupies residues 73 to 105; it reads PPVQKGLRYGMILFITSEVFFFLGFFWAFYHSS. The Mitochondrial intermembrane portion of the chain corresponds to 106–128; that stretch reads LAPTPELGGCWPPTGITPLDPFE. The helical transmembrane segment at 129 to 152 threads the bilayer; that stretch reads VPLLNTAVLLASGVTVTWAHHSLM. Topologically, residues 153 to 155 are mitochondrial matrix; the sequence is EGA. The helical transmembrane segment at 156–183 threads the bilayer; sequence RKQAIQALALTIILGVYFTALQAMEYYE. Topologically, residues 184-190 are mitochondrial intermembrane; sequence APFTIAD. The helical transmembrane segment at 191–223 threads the bilayer; that stretch reads GVYGSTFFVATGFHGLHVIIGSSFLAVCLLRQI. The Mitochondrial matrix segment spans residues 224-232; the sequence is QYHFTSEHH. Residues 233 to 256 traverse the membrane as a helical segment; sequence FGFEAAAWYWHFVDVVWLFLYVSI. Residues 257-261 lie on the Mitochondrial intermembrane side of the membrane; sequence YWWGS.

It belongs to the cytochrome c oxidase subunit 3 family. Component of the cytochrome c oxidase (complex IV, CIV), a multisubunit enzyme composed of 14 subunits. The complex is composed of a catalytic core of 3 subunits MT-CO1, MT-CO2 and MT-CO3, encoded in the mitochondrial DNA, and 11 supernumerary subunits COX4I, COX5A, COX5B, COX6A, COX6B, COX6C, COX7A, COX7B, COX7C, COX8 and NDUFA4, which are encoded in the nuclear genome. The complex exists as a monomer or a dimer and forms supercomplexes (SCs) in the inner mitochondrial membrane with NADH-ubiquinone oxidoreductase (complex I, CI) and ubiquinol-cytochrome c oxidoreductase (cytochrome b-c1 complex, complex III, CIII), resulting in different assemblies (supercomplex SCI(1)III(2)IV(1) and megacomplex MCI(2)III(2)IV(2)).

It is found in the mitochondrion inner membrane. The enzyme catalyses 4 Fe(II)-[cytochrome c] + O2 + 8 H(+)(in) = 4 Fe(III)-[cytochrome c] + 2 H2O + 4 H(+)(out). Its function is as follows. Component of the cytochrome c oxidase, the last enzyme in the mitochondrial electron transport chain which drives oxidative phosphorylation. The respiratory chain contains 3 multisubunit complexes succinate dehydrogenase (complex II, CII), ubiquinol-cytochrome c oxidoreductase (cytochrome b-c1 complex, complex III, CIII) and cytochrome c oxidase (complex IV, CIV), that cooperate to transfer electrons derived from NADH and succinate to molecular oxygen, creating an electrochemical gradient over the inner membrane that drives transmembrane transport and the ATP synthase. Cytochrome c oxidase is the component of the respiratory chain that catalyzes the reduction of oxygen to water. Electrons originating from reduced cytochrome c in the intermembrane space (IMS) are transferred via the dinuclear copper A center (CU(A)) of subunit 2 and heme A of subunit 1 to the active site in subunit 1, a binuclear center (BNC) formed by heme A3 and copper B (CU(B)). The BNC reduces molecular oxygen to 2 water molecules using 4 electrons from cytochrome c in the IMS and 4 protons from the mitochondrial matrix. The protein is Cytochrome c oxidase subunit 3 (mt-co3) of Formosania lacustris (Oriental stream loach).